The following is a 147-amino-acid chain: MSIQRTFVMIKPDGVRRNLIGEIISRFEKRGLKIIGLKMVKIDRPTAERLYEEHKGKSFFEELISYITSGPVVCMVIEGDEAVSVVRKMIGNTDPKEAPPGTIRGDYALSKAENVIHASDSEEKAKREMSIFFKEEELVTPLAQVHM.

The ATP site is built by Lys-11, Phe-59, Arg-87, Thr-93, Arg-104, and Asn-114. His-117 serves as the catalytic Pros-phosphohistidine intermediate.

This sequence belongs to the NDK family. Mg(2+) is required as a cofactor.

The protein resides in the cytoplasm. The catalysed reaction is a 2'-deoxyribonucleoside 5'-diphosphate + ATP = a 2'-deoxyribonucleoside 5'-triphosphate + ADP. The enzyme catalyses a ribonucleoside 5'-diphosphate + ATP = a ribonucleoside 5'-triphosphate + ADP. Major role in the synthesis of nucleoside triphosphates other than ATP. The ATP gamma phosphate is transferred to the NDP beta phosphate via a ping-pong mechanism, using a phosphorylated active-site intermediate. This Sulfurisphaera tokodaii (strain DSM 16993 / JCM 10545 / NBRC 100140 / 7) (Sulfolobus tokodaii) protein is Nucleoside diphosphate kinase.